Consider the following 90-residue polypeptide: DNA-binding protein HU-beta (90 aa).

Belongs to the bacterial histone-like protein family. Heterodimer of an alpha and a beta chain.

In terms of biological role, histone-like DNA-binding protein which is capable of wrapping DNA to stabilize it, and thus to prevent its denaturation under extreme environmental conditions. The polypeptide is DNA-binding protein HU-beta (hupB) (Serratia marcescens).